Consider the following 389-residue polypeptide: Succinate--CoA ligase [ADP-forming] subunit beta (389 aa).

The ATP-grasp domain occupies Arg9–Lys236. Residues Lys45, Gly52 to Gly54, Ala94, and Glu99 contribute to the ATP site. Residues Asn191 and Asp205 each coordinate Mg(2+). Substrate-binding positions include Asn256 and Gly318 to Thr320.

The protein belongs to the succinate/malate CoA ligase beta subunit family. Heterotetramer of two alpha and two beta subunits. It depends on Mg(2+) as a cofactor.

It carries out the reaction succinate + ATP + CoA = succinyl-CoA + ADP + phosphate. The enzyme catalyses GTP + succinate + CoA = succinyl-CoA + GDP + phosphate. The protein operates within carbohydrate metabolism; tricarboxylic acid cycle; succinate from succinyl-CoA (ligase route): step 1/1. Functionally, succinyl-CoA synthetase functions in the citric acid cycle (TCA), coupling the hydrolysis of succinyl-CoA to the synthesis of either ATP or GTP and thus represents the only step of substrate-level phosphorylation in the TCA. The beta subunit provides nucleotide specificity of the enzyme and binds the substrate succinate, while the binding sites for coenzyme A and phosphate are found in the alpha subunit. The polypeptide is Succinate--CoA ligase [ADP-forming] subunit beta (Paenarthrobacter aurescens (strain TC1)).